We begin with the raw amino-acid sequence, 233 residues long: Small ribosomal subunit protein uS3 (233 aa).

Residues 39 to 107 form the KH type-2 domain; sequence VRTFLTKELK…PAQINISEVR (69 aa).

This sequence belongs to the universal ribosomal protein uS3 family. As to quaternary structure, part of the 30S ribosomal subunit. Forms a tight complex with proteins S10 and S14.

Functionally, binds the lower part of the 30S subunit head. Binds mRNA in the 70S ribosome, positioning it for translation. The chain is Small ribosomal subunit protein uS3 from Pseudoalteromonas translucida (strain TAC 125).